A 246-amino-acid polypeptide reads, in one-letter code: MLVVFVATWSDLGLCKKRPKPGGWNTGGSRYPGQGSPGGNRYPPQGGGGWGQPHGGGWGQPHGGGWGQPHGGGWGQPHGGGWGQGGGTHNQWHKPSKPKTSMKHMAGAAAAGAVVGGLGGYMLGSAMSRPLIHFGNDYEDRYYRENMYRYPNQVYYRPVDQYSNQNNFVHDCVNITIKQHTVTTTTKGENFTETDVKMMERVVEQMCITQYEKESQAYYQRGSSMVLFSSPPVILLISFLIFLIVG.

An N-terminal signal peptide occupies residues M1–C15. The segment at K16–S223 is interaction with GRB2, ERI3 and SYN1. The segment at R18–T100 is disordered. 5 repeat units span residues P44–Q52, P53–Q60, P61–Q68, P69–Q76, and P77–Q84. Residues P44–Q84 are 5 X 8 AA tandem repeats of P-H-G-G-G-W-G-Q. The span at Q45 to T88 shows a compositional bias: gly residues. Cu(2+)-binding residues include H54, G55, G56, H62, G63, G64, H70, G71, G72, H78, G79, and G80. Positions Q91–T100 are enriched in basic residues. A disulfide bridge links C172 with C207. N174 and N190 each carry an N-linked (GlcNAc...) asparagine glycan. The GPI-anchor amidated serine moiety is linked to residue S223. Residues S224–G246 constitute a propeptide, removed in mature form.

Belongs to the prion family. Monomer and homodimer. Has a tendency to aggregate into amyloid fibrils containing a cross-beta spine, formed by a steric zipper of superposed beta-strands. Soluble oligomers may represent an intermediate stage on the path to fibril formation. Copper binding may promote oligomerization. Interacts with GRB2, APP, ERI3/PRNPIP and SYN1. Mislocalized cytosolically exposed PrP interacts with MGRN1; this interaction alters MGRN1 subcellular location and causes lysosomal enlargement. Interacts with KIAA1191.

Its subcellular location is the cell membrane. The protein localises to the golgi apparatus. In terms of biological role, its primary physiological function is unclear. Has cytoprotective activity against internal or environmental stresses. May play a role in neuronal development and synaptic plasticity. May be required for neuronal myelin sheath maintenance. May play a role in iron uptake and iron homeostasis. Soluble oligomers are toxic to cultured neuroblastoma cells and induce apoptosis (in vitro). Association with GPC1 (via its heparan sulfate chains) targets PRNP to lipid rafts. Also provides Cu(2+) or Zn(2+) for the ascorbate-mediated GPC1 deaminase degradation of its heparan sulfate side chains. The polypeptide is Major prion protein (PRNP) (Erythrocebus patas (Red guenon)).